The following is a 443-amino-acid chain: 23S rRNA (uracil(1939)-C(5))-methyltransferase RlmD (443 aa).

The 63-residue stretch at 4–66 folds into the TRAM domain; it reads QNRFDRTSFQ…RHFDEARVVE (63 aa). Residues Cys79, Cys85, Cys88, and Cys167 each contribute to the [4Fe-4S] cluster site. Residues Gln275, Phe304, Asn309, Glu325, Asp352, and Asp373 each contribute to the S-adenosyl-L-methionine site. The Nucleophile role is filled by Cys399.

Belongs to the class I-like SAM-binding methyltransferase superfamily. RNA M5U methyltransferase family. RlmD subfamily.

It carries out the reaction uridine(1939) in 23S rRNA + S-adenosyl-L-methionine = 5-methyluridine(1939) in 23S rRNA + S-adenosyl-L-homocysteine + H(+). Catalyzes the formation of 5-methyl-uridine at position 1939 (m5U1939) in 23S rRNA. The sequence is that of 23S rRNA (uracil(1939)-C(5))-methyltransferase RlmD from Xylella fastidiosa (strain 9a5c).